We begin with the raw amino-acid sequence, 67 residues long: Small ribosomal subunit protein bS21 (67 aa).

Belongs to the bacterial ribosomal protein bS21 family.

In Granulibacter bethesdensis (strain ATCC BAA-1260 / CGDNIH1), this protein is Small ribosomal subunit protein bS21.